Here is a 361-residue protein sequence, read N- to C-terminus: Aminomethyltransferase (361 aa).

The protein belongs to the GcvT family. As to quaternary structure, the glycine cleavage system is composed of four proteins: P, T, L and H.

It catalyses the reaction N(6)-[(R)-S(8)-aminomethyldihydrolipoyl]-L-lysyl-[protein] + (6S)-5,6,7,8-tetrahydrofolate = N(6)-[(R)-dihydrolipoyl]-L-lysyl-[protein] + (6R)-5,10-methylene-5,6,7,8-tetrahydrofolate + NH4(+). The glycine cleavage system catalyzes the degradation of glycine. The protein is Aminomethyltransferase of Bacteroides thetaiotaomicron (strain ATCC 29148 / DSM 2079 / JCM 5827 / CCUG 10774 / NCTC 10582 / VPI-5482 / E50).